Here is a 444-residue protein sequence, read N- to C-terminus: Methylenetetrahydrofolate--tRNA-(uracil-5-)-methyltransferase TrmFO (444 aa).

Gly-10 to Gly-15 contributes to the FAD binding site.

Belongs to the MnmG family. TrmFO subfamily. It depends on FAD as a cofactor.

The protein localises to the cytoplasm. The enzyme catalyses uridine(54) in tRNA + (6R)-5,10-methylene-5,6,7,8-tetrahydrofolate + NADH + H(+) = 5-methyluridine(54) in tRNA + (6S)-5,6,7,8-tetrahydrofolate + NAD(+). It catalyses the reaction uridine(54) in tRNA + (6R)-5,10-methylene-5,6,7,8-tetrahydrofolate + NADPH + H(+) = 5-methyluridine(54) in tRNA + (6S)-5,6,7,8-tetrahydrofolate + NADP(+). Its function is as follows. Catalyzes the folate-dependent formation of 5-methyl-uridine at position 54 (M-5-U54) in all tRNAs. In Streptococcus mutans serotype c (strain ATCC 700610 / UA159), this protein is Methylenetetrahydrofolate--tRNA-(uracil-5-)-methyltransferase TrmFO.